Here is a 125-residue protein sequence, read N- to C-terminus: Multifunctional methyltransferase subunit TRM112-like protein (125 aa).

The 120-residue stretch at Lys2–Val121 folds into the TRM112 domain.

It belongs to the TRM112 family.

Its subcellular location is the nucleus. It localises to the nucleoplasm. It is found in the cytoplasm. The protein resides in the perinuclear region. Its function is as follows. Acts as an activator of both RNA and protein methyltransferases. The chain is Multifunctional methyltransferase subunit TRM112-like protein from Caenorhabditis elegans.